We begin with the raw amino-acid sequence, 2774 residues long: Teneurin-2 (2774 aa).

One can recognise a Teneurin N-terminal domain in the interval 1-375 (MDVKDRRHRS…KPSKYCSWKC (375 aa)). The Cytoplasmic segment spans residues 1 to 379 (MDVKDRRHRS…YCSWKCAALS (379 aa)). Residues Ser90 and Ser124 each carry the phosphoserine modification. The interval 111 to 271 (TGSDADSDTE…HHHSSANSLN (161 aa)) is disordered. Polar residues predominate over residues 141–155 (SSGLSSRENSALTLT). Position 155 is a phosphothreonine (Thr155). The residue at position 157 (Ser157) is a Phosphoserine. Over residues 159 to 168 (NENKSDDENG) the composition is skewed to basic and acidic residues. Over residues 176 to 188 (SPSLLPSAQLPSS) the composition is skewed to low complexity. Over residues 202-211 (DSNTSHQIMD) the composition is skewed to polar residues. Positions 229–240 (SGPQQASSSGPP) are enriched in low complexity. A helical membrane pass occupies residues 380 to 400 (AIAAALLLAILLAYFIAMHLL). At 401–2774 (GLNWQLQPAD…FLRQNEMGKR (2374 aa)) the chain is on the extracellular side. Residues Asn443 and Asn482 are each glycosylated (N-linked (GlcNAc...) asparagine). EGF-like domains are found at residues 575 to 603 (DCPR…ADCA), 598 to 634 (LGAD…AECD), 636 to 668 (PMNQ…EHCE), 669 to 701 (EVDC…NCEL), 702 to 735 (ARVQ…PDCS), 738 to 766 (VCSV…AACD), 769 to 797 (VCHP…EHCT), and 808 to 841 (DGCP…PGCN). 22 cysteine pairs are disulfide-bonded: Cys576/Cys586, Cys580/Cys591, Cys593/Cys602, Cys611/Cys622, Cys624/Cys633, Cys640/Cys651, Cys645/Cys656, Cys658/Cys667, Cys672/Cys683, Cys677/Cys688, Cys690/Cys699, Cys710/Cys723, Cys725/Cys734, Cys739/Cys749, Cys743/Cys754, Cys756/Cys765, Cys770/Cys780, Cys774/Cys785, Cys787/Cys796, Cys810/Cys820, Cys814/Cys829, and Cys831/Cys840. Residues Asn925, Asn948, and Asn1267 are each glycosylated (N-linked (GlcNAc...) asparagine). NHL repeat units lie at residues 1272-1316 (LELR…VKSL), 1342-1386 (ARCG…NGII), 1401-1452 (LSCD…IAGR), 1474-1501 (LESA…INRL), and 1530-1573 (CYSG…VSKN). Residues 1583–1602 (YEAASPGEQELYVFNADGIH) form a YD 1 repeat. Asn1616 carries N-linked (GlcNAc...) asparagine glycosylation. YD repeat units follow at residues 1619–1639 (YSTD…LKIR), 1682–1701 (YDGN…WTTF), and 1702–1724 (YDYD…TSLH). Asn1712, Asn1749, Asn1773, Asn1807, and Asn1892 each carry an N-linked (GlcNAc...) asparagine glycan. YD repeat units follow at residues 1895–1914 (YFFN…ERTD), 1936–1954 (YLDK…YIFE), 1955–1975 (YDSS…HSMS), 1982–1999 (YIRN…VIFD), 2000–2021 (YSDD…VFYK), 2022–2039 (YGKL…TAVT), 2042–2062 (YDET…FSCT), 2065–2085 (YRKI…EGMV), 2093–2113 (YHDN…TPLP), 2119–2136 (YDEI…GVIY), 2137–2163 (YDIN…IKEV), 2165–2178 (YEMF…MTVQ), 2179–2202 (YDSM…TKYT), 2205–2225 (YDGD…WRYS), 2226–2246 (YDLN…LMPL), 2248–2268 (YDLR…DDDG), 2280–2300 (YNSK…SVQY), and 2302–2322 (YDGV…LQYF). Residue Asn1993 is glycosylated (N-linked (GlcNAc...) asparagine). A glycan (N-linked (GlcNAc...) asparagine) is linked at Asn2197. N-linked (GlcNAc...) asparagine glycosylation is present at Asn2337. The YD 23 repeat unit spans residues 2348–2389 (YDLQGHLFAMESSSGEEYYVASDNTGTPLAVFSINGLMIKQL). An N-linked (GlcNAc...) asparagine glycan is attached at Asn2648.

Belongs to the tenascin family. Teneurin subfamily. Homodimer; disulfide-linked. Heterodimer with either TENM1 or TENM3. May also form heterodimer with TENM4. Isoform 2 (C-terminal globular domain) interacts with ADGRL1 isoform 2. Derives from the membrane form by proteolytic processing. In terms of processing, derives from the plasma membrane form by proteolytic cleavage and translocates to the nucleus. Homophilic binding of the C-terminal extracellular domain stimulates its proteolytic cleavage and release in the cytoplasmic. Is subjected to rapid degradation by the proteasome pathway. As to expression, highly expressed in heart, followed by brain, liver, kidney and fetal brain and weakly expressed in lung and testis. No expression was detected in skeletal muscle, pancreas, spleen, ovary and fetal liver.

The protein resides in the cell membrane. It is found in the presynaptic cell membrane. The protein localises to the postsynaptic cell membrane. It localises to the endoplasmic reticulum. Its subcellular location is the golgi apparatus. The protein resides in the synapse. It is found in the cell projection. The protein localises to the dendritic spine. It localises to the filopodium. Its subcellular location is the growth cone. The protein resides in the nucleus. It is found in the PML body. Involved in neural development, regulating the establishment of proper connectivity within the nervous system. Acts as a ligand of the ADGRL1 and ADGRL3 receptors that are expressed at the surface of adjacent cells. Promotes the formation of filopodia and enlarged growth cone in neuronal cells. Mediates axon guidance and homophilic and heterophilic cell-cell adhesion. May function as a cellular signal transducer. Its function is as follows. Acts as a ligand of the ADGRL1 receptor. Mediates axon guidance and heterophilic cell-cell adhesion. In terms of biological role, induces gene transcription inhibition. This is Teneurin-2 (TENM2) from Homo sapiens (Human).